A 130-amino-acid chain; its full sequence is MIILCFDYGIKIIGIAIAETKLNYSTPIKSIFNNKKKNFWNQINIIINMWKPKYIVIGYPYKIKKKINKKIKKFAKEIKKKFKINFFLCDENYSTTEALLFLKEKKKKKKYCLHSISAKIILDSWIRKNI.

Belongs to the YqgF nuclease family.

Its subcellular location is the cytoplasm. In terms of biological role, could be a nuclease involved in processing of the 5'-end of pre-16S rRNA. This chain is Putative pre-16S rRNA nuclease, found in Buchnera aphidicola subsp. Cinara cedri (strain Cc).